The chain runs to 244 residues: ATP synthase subunit a (244 aa).

Transmembrane regions (helical) follow at residues 17–37 (LTNILMITVASVIVLLIAILT), 75–95 (FLALGVTLLMYIFVSNMLGLP), 112–132 (DPAITLTLAVMVVSLTHYYGV), 164–184 (LTLGLRLYGNIFAGEILLGLL), 196–216 (FFLGLVGTVGAIIPMLAWQAF), and 217–237 (SLFIGTIQAFIFTMLTMVYMS).

The protein belongs to the ATPase A chain family. As to quaternary structure, F-type ATPases have 2 components, CF(1) - the catalytic core - and CF(0) - the membrane proton channel. CF(1) has five subunits: alpha(3), beta(3), gamma(1), delta(1), epsilon(1). CF(0) has three main subunits: a(1), b(2) and c(9-12). The alpha and beta chains form an alternating ring which encloses part of the gamma chain. CF(1) is attached to CF(0) by a central stalk formed by the gamma and epsilon chains, while a peripheral stalk is formed by the delta and b chains.

It is found in the cell membrane. In terms of biological role, key component of the proton channel; it plays a direct role in the translocation of protons across the membrane. The protein is ATP synthase subunit a of Bacillus velezensis (strain DSM 23117 / BGSC 10A6 / LMG 26770 / FZB42) (Bacillus amyloliquefaciens subsp. plantarum).